The sequence spans 157 residues: SsrA-binding protein (157 aa).

The interval 131 to 157 (KQLHDKRDTEKKRDWSREKGRIMRARG) is disordered. Residues 132–151 (QLHDKRDTEKKRDWSREKGR) show a composition bias toward basic and acidic residues.

The protein belongs to the SmpB family.

The protein resides in the cytoplasm. Functionally, required for rescue of stalled ribosomes mediated by trans-translation. Binds to transfer-messenger RNA (tmRNA), required for stable association of tmRNA with ribosomes. tmRNA and SmpB together mimic tRNA shape, replacing the anticodon stem-loop with SmpB. tmRNA is encoded by the ssrA gene; the 2 termini fold to resemble tRNA(Ala) and it encodes a 'tag peptide', a short internal open reading frame. During trans-translation Ala-aminoacylated tmRNA acts like a tRNA, entering the A-site of stalled ribosomes, displacing the stalled mRNA. The ribosome then switches to translate the ORF on the tmRNA; the nascent peptide is terminated with the 'tag peptide' encoded by the tmRNA and targeted for degradation. The ribosome is freed to recommence translation, which seems to be the essential function of trans-translation. In Rhodopseudomonas palustris (strain BisB18), this protein is SsrA-binding protein.